Reading from the N-terminus, the 317-residue chain is MEVRYSQDSESGMLLKNGLKEGKEGKDSQGSISKTFLKDQQESFSPSGAVENCEKSRASSGDPDYCRRILVRDAKGSIREIILPKGLDLDRPKRTRTSFTAEQLYRLEMEFQRCQYVVGRERTELARQLNLSETQVKVWFQNRRTKQKKDQGKDSELRSVVSETAATCSVLRLLEQGRLLTPPGLPGLLPHCGSSSLGSALRGPSLGITANGGSSSSSRSSAGSSGTAGGSPPLPTVTSSGTVTGLQGSPPAHGLFSFPMPSLLGSVASRISSTPLGMAGSLAGNLQELSARYLCSSAFEPYSRTNGKEALDKKVLE.

A disordered region spans residues 1–62 (MEVRYSQDSE…CEKSRASSGD (62 aa)). Residues 18–27 (GLKEGKEGKD) show a composition bias toward basic and acidic residues. Residues 92-151 (PKRTRTSFTAEQLYRLEMEFQRCQYVVGRERTELARQLNLSETQVKVWFQNRRTKQKKDQ) constitute a DNA-binding region (homeobox). A disordered region spans residues 203–248 (GPSLGITANGGSSSSSRSSAGSSGTAGGSPPLPTVTSSGTVTGLQG). Residues 212-225 (GGSSSSSRSSAGSS) are compositionally biased toward low complexity. Polar residues predominate over residues 236 to 247 (TVTSSGTVTGLQ).

This sequence belongs to the EMX homeobox family. As to expression, expressed in the anterior neural keel and later in the preoptic area and optic stalk.

Its subcellular location is the nucleus. Transcription factor that is required for closure of the choroid fissure and together with Vax2 is required for optic nerve differentiation and to limit retinal development to the optic cup. The polypeptide is Ventral anterior homeobox 1 (vax1) (Danio rerio (Zebrafish)).